A 626-amino-acid polypeptide reads, in one-letter code: Polygalacturonase 1 beta-like protein 3 (626 aa).

The first 23 residues, 1 to 23, serve as a signal peptide directing secretion; it reads MLKQFLLLQSFSFFLFNVVIVGG. The stretch at 117 to 120 is one FXXY 1 repeat; sequence FSVY. Residue asparagine 124 is glycosylated (N-linked (GlcNAc...) asparagine). 11 FXXY repeats span residues 125–128, 139–142, 153–156, 167–170, 181–184, 195–198, 209–212, 223–226, 238–241, 252–255, and 266–269; these read FTNY, FKNY, FRRY, FTVY, FNSY, FTAY, FKTY, FTSY, and FSNY. Asparagine 141 carries an N-linked (GlcNAc...) asparagine glycan. An N-linked (GlcNAc...) asparagine glycan is attached at asparagine 277. FXXY repeat units lie at residues 280-283, 294-297, 308-311, 322-325, 336-339, 350-353, and 364-367; these read FTSY, FNNY, FANY, FSSY, FVNY, FTGY, and FKTY. A glycan (N-linked (GlcNAc...) asparagine) is linked at asparagine 370. 2 FXXY repeats span residues 373–376 and 383–386; these read FKDY and FAKY. Residues asparagine 387 and asparagine 465 are each glycosylated (N-linked (GlcNAc...) asparagine). Positions 411–625 constitute a BURP domain; sequence FFRESSLKEG…FENDMNWAIA (215 aa).

In terms of tissue distribution, expressed in flowers and stems. Detected in trichomes, guard cells, root vascular tissue, root hairs, pollen sacs, sepals and styles of pistils.

The protein localises to the secreted. The protein resides in the extracellular space. It localises to the apoplast. Its subcellular location is the cell wall. Involved in cell size determination. May serve as a chaperone for expansins through the secretory pathway. This Arabidopsis thaliana (Mouse-ear cress) protein is Polygalacturonase 1 beta-like protein 3.